A 284-amino-acid chain; its full sequence is Pantothenate synthetase (284 aa).

30–37 provides a ligand contact to ATP; the sequence is MGNLHEGH. Catalysis depends on H37, which acts as the Proton donor. Q61 contributes to the (R)-pantoate binding site. Q61 contacts beta-alanine. 149 to 152 provides a ligand contact to ATP; that stretch reads GEKD. A (R)-pantoate-binding site is contributed by Q155. ATP is bound by residues V178 and 186–189; that span reads LSSR.

The protein belongs to the pantothenate synthetase family. As to quaternary structure, homodimer.

Its subcellular location is the cytoplasm. The catalysed reaction is (R)-pantoate + beta-alanine + ATP = (R)-pantothenate + AMP + diphosphate + H(+). The protein operates within cofactor biosynthesis; (R)-pantothenate biosynthesis; (R)-pantothenate from (R)-pantoate and beta-alanine: step 1/1. Functionally, catalyzes the condensation of pantoate with beta-alanine in an ATP-dependent reaction via a pantoyl-adenylate intermediate. The protein is Pantothenate synthetase of Yersinia pestis bv. Antiqua (strain Antiqua).